We begin with the raw amino-acid sequence, 285 residues long: NAD kinase (285 aa).

Asp76 acts as the Proton acceptor in catalysis. NAD(+)-binding positions include Asp76–Gly77, Asn151–Glu152, His162, Arg179, Asp181, Thr192–Ser197, and Gln252.

This sequence belongs to the NAD kinase family. The cofactor is a divalent metal cation.

It is found in the cytoplasm. The catalysed reaction is NAD(+) + ATP = ADP + NADP(+) + H(+). In terms of biological role, involved in the regulation of the intracellular balance of NAD and NADP, and is a key enzyme in the biosynthesis of NADP. Catalyzes specifically the phosphorylation on 2'-hydroxyl of the adenosine moiety of NAD to yield NADP. This Haemophilus influenzae (strain ATCC 51907 / DSM 11121 / KW20 / Rd) protein is NAD kinase.